The sequence spans 388 residues: Deoxyguanosinetriphosphate triphosphohydrolase-like protein (388 aa).

Positions 1-32 (MSVGMAAPRAPYSCDPDRSRGRLFAEPPSRTR) are disordered. The HD domain maps to 69-205 (RLTHSLEVAQ…AALADDIAYD (137 aa)).

It belongs to the dGTPase family. Type 2 subfamily.

The sequence is that of Deoxyguanosinetriphosphate triphosphohydrolase-like protein from Bradyrhizobium sp. (strain ORS 278).